The sequence spans 201 residues: Small ribosomal subunit protein uS4c (201 aa).

Residues 20 to 44 form a disordered region; the sequence is GLTSKRPRAGSDLRNQSRSGKKSQY. An S4 RNA-binding domain is found at 89 to 152; sequence MRLDNILFRL…NSRTLVQNLL (64 aa).

It belongs to the universal ribosomal protein uS4 family. As to quaternary structure, part of the 30S ribosomal subunit. Contacts protein S5. The interaction surface between S4 and S5 is involved in control of translational fidelity.

The protein resides in the plastid. The protein localises to the chloroplast. Functionally, one of the primary rRNA binding proteins, it binds directly to 16S rRNA where it nucleates assembly of the body of the 30S subunit. In terms of biological role, with S5 and S12 plays an important role in translational accuracy. This is Small ribosomal subunit protein uS4c (rps4) from Aethionema cordifolium (Lebanon stonecress).